The following is a 331-amino-acid chain: UPF0194 membrane protein Ent638_1286 (331 aa).

The signal sequence occupies residues methionine 1 to alanine 16. Residues glutamate 107–alanine 208 adopt a coiled-coil conformation.

The protein belongs to the UPF0194 family.

The protein resides in the periplasm. This is UPF0194 membrane protein Ent638_1286 from Enterobacter sp. (strain 638).